The sequence spans 256 residues: Thiazole synthase (256 aa).

Residue K95 is the Schiff-base intermediate with DXP of the active site. Residues G156, 182–183, and 204–205 each bind 1-deoxy-D-xylulose 5-phosphate; these read AG and NT.

The protein belongs to the ThiG family. In terms of assembly, homotetramer. Forms heterodimers with either ThiH or ThiS.

It is found in the cytoplasm. The catalysed reaction is [ThiS sulfur-carrier protein]-C-terminal-Gly-aminoethanethioate + 2-iminoacetate + 1-deoxy-D-xylulose 5-phosphate = [ThiS sulfur-carrier protein]-C-terminal Gly-Gly + 2-[(2R,5Z)-2-carboxy-4-methylthiazol-5(2H)-ylidene]ethyl phosphate + 2 H2O + H(+). Its pathway is cofactor biosynthesis; thiamine diphosphate biosynthesis. Catalyzes the rearrangement of 1-deoxy-D-xylulose 5-phosphate (DXP) to produce the thiazole phosphate moiety of thiamine. Sulfur is provided by the thiocarboxylate moiety of the carrier protein ThiS. In vitro, sulfur can be provided by H(2)S. This Escherichia coli O8 (strain IAI1) protein is Thiazole synthase.